The chain runs to 86 residues: Small ribosomal subunit protein bS16 (86 aa).

This sequence belongs to the bacterial ribosomal protein bS16 family.

The protein is Small ribosomal subunit protein bS16 of Borreliella afzelii (strain PKo) (Borrelia afzelii).